The following is a 327-amino-acid chain: Auxin-responsive protein IAA18 (327 aa).

Disordered stretches follow at residues 26 to 45 (VKEA…DEDK), 52 to 98 (GLPG…IGTT), and 180 to 202 (NLTN…DDKA). The EAR-like (transcriptional repression) signature appears at 49-53 (LKLGL). Residues 58–69 (QEERAADSREKI) are compositionally biased toward basic and acidic residues. The span at 70-82 (QQQQRESSSEPSI) shows a compositional bias: low complexity. The span at 180–189 (NLTNGSSFKQ) shows a compositional bias: polar residues. The span at 190-202 (SPERQNDEADDKA) shows a compositional bias: basic and acidic residues. In terms of domain architecture, PB1 spans 209-313 (RPLVKINMDG…TVKRLRVMRR (105 aa)).

The protein belongs to the Aux/IAA family. As to quaternary structure, homodimers and heterodimers. In terms of tissue distribution, highly expressed in flowers. Expressed in roots and etiolated seedlings.

It localises to the nucleus. Aux/IAA proteins are short-lived transcriptional factors that function as repressors of early auxin response genes at low auxin concentrations. This is Auxin-responsive protein IAA18 (IAA18) from Oryza sativa subsp. japonica (Rice).